We begin with the raw amino-acid sequence, 239 residues long: 1-(5-phosphoribosyl)-5-[(5-phosphoribosylamino)methylideneamino] imidazole-4-carboxamide isomerase (239 aa).

Catalysis depends on Asp-8, which acts as the Proton acceptor. Residue Asp-129 is the Proton donor of the active site.

It belongs to the HisA/HisF family.

The protein localises to the cytoplasm. It catalyses the reaction 1-(5-phospho-beta-D-ribosyl)-5-[(5-phospho-beta-D-ribosylamino)methylideneamino]imidazole-4-carboxamide = 5-[(5-phospho-1-deoxy-D-ribulos-1-ylimino)methylamino]-1-(5-phospho-beta-D-ribosyl)imidazole-4-carboxamide. It functions in the pathway amino-acid biosynthesis; L-histidine biosynthesis; L-histidine from 5-phospho-alpha-D-ribose 1-diphosphate: step 4/9. In Bacillus cereus (strain G9842), this protein is 1-(5-phosphoribosyl)-5-[(5-phosphoribosylamino)methylideneamino] imidazole-4-carboxamide isomerase.